Consider the following 467-residue polypeptide: Retinoic acid receptor RXR-gamma (467 aa).

The segment at 1 to 142 (MYGNYPHFIK…TSPGSLAKHI (142 aa)) is modulating. 2 NR C4-type zinc fingers span residues 143–163 (CAIC…CEGC) and 179–203 (CRDN…YQKC). Positions 143-208 (CAICGDRSSG…RYQKCLAMGM (66 aa)) form a DNA-binding region, nuclear receptor. The tract at residues 209 to 232 (KREAVQEERQGSRERSENEAESTS) is hinge. The span at 214-226 (QEERQGSRERSEN) shows a compositional bias: basic and acidic residues. The disordered stretch occupies residues 214–237 (QEERQGSRERSENEAESTSGGSED). The NR LBD domain maps to 235–463 (SEDMPVERIL…TFLMEMLETP (229 aa)).

It belongs to the nuclear hormone receptor family. NR2 subfamily. In terms of assembly, homodimer. Heterodimer; with a RAR molecule. Binds DNA preferentially as a RAR/RXR heterodimer. In terms of tissue distribution, isoform 1 is highly expressed inliver. Isoform 2 is abundantly expressed in eye and dorsal root ganglia.

It localises to the nucleus. In terms of biological role, receptor for retinoic acid. Retinoic acid receptors bind as heterodimers to their target response elements in response to their ligands, all-trans or 9-cis retinoic acid, and regulate gene expression in various biological processes. The RAR/RXR heterodimers bind to the retinoic acid response elements (RARE) composed of tandem 5'-AGGTCA-3' sites known as DR1-DR5. The high affinity ligand for RXRs is 9-cis retinoic acid. The protein is Retinoic acid receptor RXR-gamma (RXRG) of Gallus gallus (Chicken).